A 327-amino-acid polypeptide reads, in one-letter code: AA9 family lytic polysaccharide monooxygenase G (327 aa).

Positions 1–20 (MKLNLASLCFLASIAPLVSG) are cleaved as a signal peptide. Cu(2+) is bound by residues His-21 and His-96. Residues Cys-62 and Cys-185 are joined by a disulfide bond. An O2-binding site is contributed by His-172. Tyr-182 contributes to the Cu(2+) binding site. Asn-290 carries an N-linked (GlcNAc...) asparagine glycan. One can recognise a CBM1 domain in the interval 291–327 (GTIKKYYQCGGQGWTGSGSCEAGTSCREWNTWYFQCV).

This sequence belongs to the polysaccharide monooxygenase AA9 family. Cu(2+) is required as a cofactor.

It localises to the secreted. The enzyme catalyses [(1-&gt;4)-beta-D-glucosyl]n+m + reduced acceptor + O2 = 4-dehydro-beta-D-glucosyl-[(1-&gt;4)-beta-D-glucosyl]n-1 + [(1-&gt;4)-beta-D-glucosyl]m + acceptor + H2O.. In terms of biological role, lytic polysaccharide monooxygenase (LPMO) that depolymerizes crystalline and amorphous polysaccharides via the oxidation of scissile alpha- or beta-(1-4)-glycosidic bonds, yielding C1 or C4 oxidation products. Catalysis by LPMOs requires the reduction of the active-site copper from Cu(II) to Cu(I) by a reducing agent and H(2)O(2) or O(2) as a cosubstrate. This chain is AA9 family lytic polysaccharide monooxygenase G, found in Aspergillus tamarii.